Here is a 325-residue protein sequence, read N- to C-terminus: Reticulocalbin-1 (325 aa).

An N-terminal signal peptide occupies residues 1–23 (MARGGRLGLALGLLLALVLALRA). N-linked (GlcNAc...) asparagine; partial glycosylation occurs at Asn-47. Phosphoserine is present on residues Ser-49 and Ser-74. EF-hand domains follow at residues 73–108 (ESKE…VQKR), 109–144 (YIYD…YYLG), 160–195 (KMLP…EEFE), 197–232 (MKEI…HEDN), 238–273 (WVLS…QDYD), and 274–309 (HAQA…FVGS). Ca(2+)-binding residues include Asp-86, Asp-88, Asp-90, Glu-97, Asp-122, Asp-124, Asp-126, Lys-128, Glu-133, Asp-173, Asp-175, Asp-177, Thr-179, Glu-184, Asp-210, Asn-212, Asp-214, Glu-221, Asp-251, Asn-253, Asp-255, Lys-257, Glu-262, Asp-287, Asn-289, Asp-291, Met-293, and Glu-298. The Prevents secretion from ER signature appears at 322–325 (HDEL).

This sequence belongs to the CREC family. Post-translationally, O-glycosylated. O-mannosylated by POMT1 and POMT2 and elongated by POMGNT1.

Its subcellular location is the endoplasmic reticulum lumen. Functionally, may regulate calcium-dependent activities in the endoplasmic reticulum lumen or post-ER compartment. This Mus musculus (Mouse) protein is Reticulocalbin-1 (Rcn1).